The sequence spans 395 residues: Chalcone synthase (395 aa).

Residue cysteine 169 is part of the active site.

This sequence belongs to the thiolase-like superfamily. Chalcone/stilbene synthases family.

The catalysed reaction is (E)-4-coumaroyl-CoA + 3 malonyl-CoA + 3 H(+) = 2',4,4',6'-tetrahydroxychalcone + 3 CO2 + 4 CoA. It functions in the pathway secondary metabolite biosynthesis; flavonoid biosynthesis. In terms of biological role, the primary product of this enzyme is 4,2',4',6'-tetrahydroxychalcone (also termed naringenin-chalcone or chalcone) which can under specific conditions spontaneously isomerize into naringenin. This chain is Chalcone synthase (CHS), found in Pinus strobus (Eastern white pine).